The following is a 226-amino-acid chain: Ribonuclease 3 (226 aa).

Positions 7 to 129 (LPRLCRTLSY…IIGAVYLDSD (123 aa)) constitute an RNase III domain. Position 42 (Glu42) interacts with Mg(2+). Residue Asp46 is part of the active site. The Mg(2+) site is built by Asp115 and Glu118. The active site involves Glu118. The DRBM domain occupies 156–226 (DAKTLLQEHL…AAQVLELLKK (71 aa)).

It belongs to the ribonuclease III family. As to quaternary structure, homodimer. Requires Mg(2+) as cofactor.

The protein localises to the cytoplasm. The enzyme catalyses Endonucleolytic cleavage to 5'-phosphomonoester.. Digests double-stranded RNA. Involved in the processing of primary rRNA transcript to yield the immediate precursors to the large and small rRNAs (23S and 16S). Processes some mRNAs, and tRNAs when they are encoded in the rRNA operon. Processes pre-crRNA and tracrRNA of type II CRISPR loci if present in the organism. The chain is Ribonuclease 3 from Shewanella baltica (strain OS223).